A 510-amino-acid polypeptide reads, in one-letter code: NAD(P)H-quinone oxidoreductase subunit 2 B, chloroplastic (510 aa).

13 helical membrane passes run 24–44 (LLLFDGSLIVPECILIFGLIL), 57–77 (IPWLYFISSTSLVMSITALLF), 99–119 (IFQFLILLCSTLCIPLSVEYI), 124–144 (MAITEFLLFVLTATLGGMFLC), 149–169 (LITIFVAPECFSLCSYLLSGY), 183–203 (YLLMGGASSSILVHGFSWLYG), 227–247 (PGISIALIFITVGIGFKLSPA), 295–315 (WHLLLETLAILSMILGNLIAI), 323–343 (MLAYSSIGQIGYVIIGIIVGD), 354–374 (YMLFYISMNLGTFACIVLFGL), 395–415 (ALSLALCLLSLGGLPPLAGFF), 418–438 (LYLFWCGWQAGLYFLVLIGLL), and 484–504 (MIVCVIASTIPGISMNPIIAI).

This sequence belongs to the complex I subunit 2 family. As to quaternary structure, NDH is composed of at least 16 different subunits, 5 of which are encoded in the nucleus.

The protein localises to the plastid. The protein resides in the chloroplast thylakoid membrane. The catalysed reaction is a plastoquinone + NADH + (n+1) H(+)(in) = a plastoquinol + NAD(+) + n H(+)(out). It catalyses the reaction a plastoquinone + NADPH + (n+1) H(+)(in) = a plastoquinol + NADP(+) + n H(+)(out). Functionally, NDH shuttles electrons from NAD(P)H:plastoquinone, via FMN and iron-sulfur (Fe-S) centers, to quinones in the photosynthetic chain and possibly in a chloroplast respiratory chain. The immediate electron acceptor for the enzyme in this species is believed to be plastoquinone. Couples the redox reaction to proton translocation, and thus conserves the redox energy in a proton gradient. This Daucus carota (Wild carrot) protein is NAD(P)H-quinone oxidoreductase subunit 2 B, chloroplastic.